A 626-amino-acid chain; its full sequence is Serine/threonine-protein kinase PknH (626 aa).

Residues 1–403 (MSDAQDSRVG…QTPRKTNPWP (403 aa)) lie on the Cytoplasmic side of the membrane. Residues 16–276 (YHLKRLLGRG…DLALAAHEAL (261 aa)) form the Protein kinase domain. ATP is bound by residues 22–30 (LGRGGMGEV) and K45. D139 (proton acceptor) is an active-site residue. T170 bears the Phosphothreonine mark. The segment at 292–396 (QESTLPAPPK…GGPSPWAQTP (105 aa)) is disordered. 2 stretches are compositionally biased toward pro residues: residues 297 to 308 (PAPPKPVPPPTM) and 316 to 342 (RQPPAPPVTPPGVQPAPKPSYTPPAQP). The segment covering 343 to 355 (GPAGQRPGPTGQP) has biased composition (low complexity). A helical transmembrane segment spans residues 404–424 (LVAGAAAVVLVLVLGAIGIWI). Topologically, residues 425–626 (AIRPKPVQPP…AKIVDKVNKE (202 aa)) are extracellular. 2 disulfides stabilise this stretch: C482–C545 and C587–C604.

The protein belongs to the protein kinase superfamily. Ser/Thr protein kinase family. A divalent metal cation is required as a cofactor. Post-translationally, autophosphorylated on threonine and serine residues. Dephosphorylated by PstP.

The protein localises to the cell membrane. The enzyme catalyses L-seryl-[protein] + ATP = O-phospho-L-seryl-[protein] + ADP + H(+). The catalysed reaction is L-threonyl-[protein] + ATP = O-phospho-L-threonyl-[protein] + ADP + H(+). Its function is as follows. May regulate bacterial growth in response to external signals to facilitate adaptation to the host environment. This chain is Serine/threonine-protein kinase PknH (pknH), found in Mycobacterium tuberculosis (strain CDC 1551 / Oshkosh).